The following is a 205-amino-acid chain: Large ribosomal subunit protein uL3c (205 aa).

The segment at 127 to 153 (HFSRGPMSHGSKNHRQPGSIGAGTTPG) is disordered.

Belongs to the universal ribosomal protein uL3 family. Part of the 50S ribosomal subunit.

The protein resides in the plastid. It localises to the chloroplast. Its function is as follows. One of the primary rRNA binding proteins, it binds directly near the 3'-end of the 23S rRNA, where it nucleates assembly of the 50S subunit. In Porphyra purpurea (Red seaweed), this protein is Large ribosomal subunit protein uL3c (rpl3).